Here is a 454-residue protein sequence, read N- to C-terminus: MPTYYLALHGGQSYNLIVDTDMSGNPSLSVIPTNPYQEQLSNNPLIQLQIVVGENTGAPAPPQPPPPPPPPPPPERRDAWTQEPLPLDMNPLGSDASQGPLASSIRMLCMAQYLLRNARGQQGLLRPLGPQTRSQVTLERQPVHNPRQEAPIILLQSPAPPRFTPVPMVALGHTLQPTPPPRPTLPQPRIPLIIPPRHTNQPATTPPTAPQRLTLGHQLSLPPHPPPHQSTPHCSSDSTGLPPPPTSYSIPSMTLSPEPLPPPAAPAHPLPGVIYDQQALPPTPGPPWWPPVRDPTPTTQTPPTNTKQGPDQGQGRGRWRGRGRSKGRGRMHKLPEPRRPGPDTSSPSMPQLSPVVSLHQGQGPENSPTPGPSTAGPVCRVTPSATPDISPIHEPESSDSEEPPFLFPSDWYPPTLEPAELDESWEGIFETTESHSSDEENVGGPSKRPRTSTQ.

Disordered regions lie at residues 55 to 98 and 175 to 454; these read NTGA…DASQ and LQPT…TSTQ. Pro residues-rich tracts occupy residues 59–73 and 177–189; these read PAPPQPPPPPPPPPP and PTPPPRPTLPQPR. The span at 190–203 shows a compositional bias: low complexity; sequence IPLIIPPRHTNQPA. Pro residues-rich tracts occupy residues 258–269 and 281–294; these read EPLPPPAAPAHP and PPTPGPPWWPPVRD. Over residues 295-306 the composition is skewed to low complexity; that stretch reads PTPTTQTPPTNT. Over residues 317–332 the composition is skewed to basic residues; the sequence is GRWRGRGRSKGRGRMH. Residues 350 to 354 carry the PXLXP motif, interaction with host ZMYND11 motif; the sequence is PQLSP. A compositionally biased stretch (polar residues) spans 359–368; it reads HQGQGPENSP. The PXLXP motif, interaction with host ZMYND11 signature appears at 404–408; it reads PFLFP.

The protein belongs to the herpesviridae EBNA2 family. As to quaternary structure, interacts with human SMARCB1/INI1, presumably generating an open chromatin conformation at the EBNA2-responsive target genes. Interacts with human WAPL. Interacts with host CBF1; this interaction allows transcriptional activation by EBNA2. Interacts with host general transcription factors GTF2B, ERCC2 and ERCC3. Interacts (via PXLXP motif) with host ZMYND11/BS69 (via MYND-type zinc finger). Interacts with host EBF1. Post-translationally, phosphorylated.

It is found in the host nucleus matrix. In terms of biological role, plays a key role in the activation of the host resting B-cell and stimulation of B-cell proliferation. Acts by up-regulating the expression of viral EBNA1-6, LMP1, LMP2A and LMP2B genes, as well as several host genes including CD21, CD23 and MYC. Activates transcription by acting as an adapter molecule that binds to cellular sequence-specific DNA-binding proteins such as host CBF1, SMARCB1 and SPI1. Once EBNA2 is near promoter sites, its acidic activating domain recruits basal and activation-associated transcription factors TFIIB, TAF40, TFIIH components ERCC2 and ERCC3, and CBP in order to promote transcription. Alternatively, EBNA2 can affect activities of cell cycle regulators and retard cell cycle progression at G2/M phase. It also induces chromosomal instability, by disrupting mitotic checkpoints, multi-nucleation and formation of micronuclei in infected cells. The protein is Epstein-Barr nuclear antigen 2 (EBNA2) of Epstein-Barr virus (strain AG876) (HHV-4).